The following is a 245-amino-acid chain: Biosynthetic peptidoglycan transglycosylase (245 aa).

Residues 19–39 (IVYAGAVFAAAWLATQLFYFV) form a helical membrane-spanning segment.

The protein belongs to the glycosyltransferase 51 family.

It is found in the cell inner membrane. It catalyses the reaction [GlcNAc-(1-&gt;4)-Mur2Ac(oyl-L-Ala-gamma-D-Glu-L-Lys-D-Ala-D-Ala)](n)-di-trans,octa-cis-undecaprenyl diphosphate + beta-D-GlcNAc-(1-&gt;4)-Mur2Ac(oyl-L-Ala-gamma-D-Glu-L-Lys-D-Ala-D-Ala)-di-trans,octa-cis-undecaprenyl diphosphate = [GlcNAc-(1-&gt;4)-Mur2Ac(oyl-L-Ala-gamma-D-Glu-L-Lys-D-Ala-D-Ala)](n+1)-di-trans,octa-cis-undecaprenyl diphosphate + di-trans,octa-cis-undecaprenyl diphosphate + H(+). Its pathway is cell wall biogenesis; peptidoglycan biosynthesis. In terms of biological role, peptidoglycan polymerase that catalyzes glycan chain elongation from lipid-linked precursors. The polypeptide is Biosynthetic peptidoglycan transglycosylase (Burkholderia multivorans (strain ATCC 17616 / 249)).